The sequence spans 1250 residues: Protein SSD1 (1250 aa).

Polar residues predominate over residues 1 to 22; sequence MSKNSNVNNNRSQEPNNMFVQT. The interval 1-32 is disordered; it reads MSKNSNVNNNRSQEPNNMFVQTTGGGKNAPKQ. An N-acetylserine modification is found at Ser-2. Residue Ser-40 is modified to Phosphoserine. The tract at residues 79–163 is disordered; sequence TGQYLSGNSG…SSIYGHSRRH (85 aa). Positions 84-94 are enriched in polar residues; it reads SGNSGSNNHFT. The span at 124 to 145 shows a compositional bias: low complexity; sequence NNSGYYHNSYDNNNNSNNPGSN. Phosphoserine occurs at positions 164 and 183. The span at 197 to 208 shows a compositional bias: polar residues; the sequence is QADSGSNSTTEQ. Disordered regions lie at residues 197 to 338, 418 to 443, and 455 to 517; these read QADS…GGRK, KEKE…SSDD, and SNNF…DDVE. A Phosphothreonine modification is found at Thr-227. Residues 264-276 are compositionally biased toward polar residues; it reads NEYSPGINSNWRN. Low complexity predominate over residues 277–287; the sequence is QSQQPQQQLSP. 2 positions are modified to phosphoserine: Ser-286 and Ser-322. A compositionally biased stretch (polar residues) spans 319–329; that stretch reads SNSSVHSFSSQ. Residues 481–495 are compositionally biased toward polar residues; the sequence is STINNDSDSLSSPTK. Phosphoserine is present on residues Ser-491 and Ser-492. The segment covering 497 to 510 has biased composition (basic residues); that stretch reads GVRRRSSLKQRPTQ. One can recognise a CSD2 domain in the interval 582–657; that stretch reads AWFKPTDKKV…EIDSILRDNN (76 aa). At Tyr-688 the chain carries Phosphotyrosine. The region spanning 694-1015 is the RNB domain; that stretch reads DTNEYNIFAI…VHRQLKAVIH (322 aa). The region spanning 1064–1148 is the DIS3L2 C-terminal domain; that stretch reads GQLLTMATVL…SIKNKFRSTA (85 aa).

It belongs to the RNR ribonuclease family.

Its function is as follows. Can suppress the lethality due to deletion of SIT4, and partially the defects due to BCY1 disruption. Is implicated in the control of the cell cycle G1 phase. The sequence is that of Protein SSD1 (SSD1) from Saccharomyces cerevisiae (strain ATCC 204508 / S288c) (Baker's yeast).